Here is a 332-residue protein sequence, read N- to C-terminus: Large ribosomal subunit protein uL10 (332 aa).

The tract at residues 294–332 (QAAAAPVAVEDNTEEPEEEEEEEEDAAESAAAGLGALFG) is disordered. Over residues 304-320 (DNTEEPEEEEEEEEDAA) the composition is skewed to acidic residues.

The protein belongs to the universal ribosomal protein uL10 family. Part of the 50S ribosomal subunit. Forms part of the ribosomal stalk which helps the ribosome interact with GTP-bound translation factors. Forms a heptameric L10(L12)2(L12)2(L12)2 complex, where L10 forms an elongated spine to which the L12 dimers bind in a sequential fashion.

Its function is as follows. Forms part of the ribosomal stalk, playing a central role in the interaction of the ribosome with GTP-bound translation factors. The protein is Large ribosomal subunit protein uL10 of Methanosphaera stadtmanae (strain ATCC 43021 / DSM 3091 / JCM 11832 / MCB-3).